A 569-amino-acid chain; its full sequence is Formate--tetrahydrofolate ligase (569 aa).

64–71 (TPHGEGKT) contacts ATP.

Belongs to the formate--tetrahydrofolate ligase family.

It catalyses the reaction (6S)-5,6,7,8-tetrahydrofolate + formate + ATP = (6R)-10-formyltetrahydrofolate + ADP + phosphate. Its pathway is one-carbon metabolism; tetrahydrofolate interconversion. The sequence is that of Formate--tetrahydrofolate ligase from Shewanella sp. (strain MR-7).